Here is a 240-residue protein sequence, read N- to C-terminus: UDP-2,3-diacylglucosamine hydrolase (240 aa).

5 residues coordinate Mn(2+): Asp-8, His-10, Asp-41, Asn-79, and His-114. 79 to 80 provides a ligand contact to substrate; the sequence is NR. Substrate-binding residues include Asp-122, Ser-160, Asn-164, Lys-167, and His-195. Positions 195 and 197 each coordinate Mn(2+).

This sequence belongs to the LpxH family. Mn(2+) serves as cofactor.

Its subcellular location is the cell inner membrane. The catalysed reaction is UDP-2-N,3-O-bis[(3R)-3-hydroxytetradecanoyl]-alpha-D-glucosamine + H2O = 2-N,3-O-bis[(3R)-3-hydroxytetradecanoyl]-alpha-D-glucosaminyl 1-phosphate + UMP + 2 H(+). Its pathway is glycolipid biosynthesis; lipid IV(A) biosynthesis; lipid IV(A) from (3R)-3-hydroxytetradecanoyl-[acyl-carrier-protein] and UDP-N-acetyl-alpha-D-glucosamine: step 4/6. Functionally, hydrolyzes the pyrophosphate bond of UDP-2,3-diacylglucosamine to yield 2,3-diacylglucosamine 1-phosphate (lipid X) and UMP by catalyzing the attack of water at the alpha-P atom. Involved in the biosynthesis of lipid A, a phosphorylated glycolipid that anchors the lipopolysaccharide to the outer membrane of the cell. In Escherichia coli O7:K1 (strain IAI39 / ExPEC), this protein is UDP-2,3-diacylglucosamine hydrolase.